We begin with the raw amino-acid sequence, 484 residues long: Crt homolog 2 (484 aa).

Residues 1 to 57 (MSEEKLPLLSPLNENDIENDYKDENLKSDLDKLSNVKKQSIIQRFKDYLKNSISKQT) lie on the Cytoplasmic side of the membrane. The helical transmembrane segment at 58–78 (ATVLVYVVLYILSGVINSLLL) threads the bilayer. Topologically, residues 79–94 (KKVMNVFTNYGFFLNQ) are vacuolar. Residues 95–115 (LTNYGYVPIFGAIVLYKILFT) form a helical membrane-spanning segment. At 116-128 (NDIPKDTRSFPQW) the chain is on the cytoplasmic side. A helical transmembrane segment spans residues 129-149 (KFVIMGALDAVTGYFVVIGGI). The Vacuolar portion of the chain corresponds to 150 to 154 (KTTGP). The helical transmembrane segment at 155-175 (LQQLLNQSVIPFTMLLSFIFL) threads the bilayer. Residues 176–178 (KER) are Cytoplasmic-facing. The helical transmembrane segment at 179 to 199 (YSLIQLGGALIIIGGVVVSLI) threads the bilayer. At 200–210 (PSLTGGNTSGN) the chain is on the vacuolar side. N-linked (GlcNAc...) asparagine glycosylation is present at asparagine 206. The helical transmembrane segment at 211–231 (MLFYNFFYLISMIPYAFSNVY) threads the bilayer. Over 232–244 (KAIGFSTVEDMDV) the chain is Cytoplasmic. The helical transmembrane segment at 245–265 (WYLQYFDALYQSLVGTVLFPI) threads the bilayer. At 266-328 (NNWLPPPSDM…LGCDNCHGAW (63 aa)) the chain is on the vacuolar side. An N-linked (GlcNAc...) asparagine glycan is attached at asparagine 302. Residues 329–349 (VVVLIYMAVNVLYNVFILLVL) traverse the membrane as a helical segment. The Cytoplasmic portion of the chain corresponds to 350 to 355 (KHAGAT). A helical transmembrane segment spans residues 356–378 (VFSIANTLRLPLTNIAFSFKFIM). The Vacuolar segment spans residues 379–382 (GSDS). The helical transmembrane segment at 383–403 (NPFSGLSVAGLCIILLGLGGY) threads the bilayer. Over 404–484 (RVGSMIKQKK…RNQNSIYGDQ (81 aa)) the chain is Cytoplasmic.

This sequence belongs to the CRT-like transporter family.

It is found in the vacuole membrane. Nutrient transporter. Involved in maintaining the osmotic homeostasis of the digestive vacuole. This chain is Crt homolog 2 (crtp2), found in Dictyostelium discoideum (Social amoeba).